The primary structure comprises 241 residues: Small ribosomal subunit protein uS2 (241 aa).

This sequence belongs to the universal ribosomal protein uS2 family.

This Photorhabdus laumondii subsp. laumondii (strain DSM 15139 / CIP 105565 / TT01) (Photorhabdus luminescens subsp. laumondii) protein is Small ribosomal subunit protein uS2.